The sequence spans 91 residues: Elongation factor 1-beta (91 aa).

This sequence belongs to the EF-1-beta/EF-1-delta family.

Functionally, promotes the exchange of GDP for GTP in EF-1-alpha/GDP, thus allowing the regeneration of EF-1-alpha/GTP that could then be used to form the ternary complex EF-1-alpha/GTP/AAtRNA. The protein is Elongation factor 1-beta (ef1b) of Pyrococcus abyssi (strain GE5 / Orsay).